The primary structure comprises 455 residues: Exodeoxyribonuclease 7 large subunit (455 aa).

Belongs to the XseA family. In terms of assembly, heterooligomer composed of large and small subunits.

It localises to the cytoplasm. It catalyses the reaction Exonucleolytic cleavage in either 5'- to 3'- or 3'- to 5'-direction to yield nucleoside 5'-phosphates.. Bidirectionally degrades single-stranded DNA into large acid-insoluble oligonucleotides, which are then degraded further into small acid-soluble oligonucleotides. This chain is Exodeoxyribonuclease 7 large subunit, found in Escherichia fergusonii (strain ATCC 35469 / DSM 13698 / CCUG 18766 / IAM 14443 / JCM 21226 / LMG 7866 / NBRC 102419 / NCTC 12128 / CDC 0568-73).